The chain runs to 497 residues: Beta-glucosidase 8 (497 aa).

A signal peptide spans 1 to 22 (MKHFNLLSIILVIVLATSYIDA). Gln-42 contacts a beta-D-glucoside. A glycan (N-linked (GlcNAc...) asparagine) is linked at Asn-65. Residues His-139 and 184-185 (NE) contribute to the a beta-D-glucoside site. The active-site Proton donor is Glu-185. The N-linked (GlcNAc...) asparagine glycan is linked to Asn-202. Tyr-319 contributes to the a beta-D-glucoside binding site. N-linked (GlcNAc...) asparagine glycosylation occurs at Asn-354. Glu-387, Trp-430, and Phe-446 together coordinate a beta-D-glucoside. Glu-387 acts as the Nucleophile in catalysis. Residues Asn-452, Asn-474, and Asn-490 are each glycosylated (N-linked (GlcNAc...) asparagine).

Belongs to the glycosyl hydrolase 1 family.

The enzyme catalyses Hydrolysis of terminal, non-reducing beta-D-glucosyl residues with release of beta-D-glucose.. The protein is Beta-glucosidase 8 of Arabidopsis thaliana (Mouse-ear cress).